Reading from the N-terminus, the 234-residue chain is HTH-type transcriptional regulator MT1864 (234 aa).

The HTH tetR-type domain occupies 15-75 (EQIEAKIVEL…LLLVDAYSDL (61 aa)). Positions 38–57 (SLRAIARNLGMVSSAVYRYV) form a DNA-binding region, H-T-H motif.

As to quaternary structure, homodimer.

The protein resides in the cytoplasm. May participate in the regulatory network that controls the expression of MmpL lipid transporters. The chain is HTH-type transcriptional regulator MT1864 from Mycobacterium tuberculosis (strain CDC 1551 / Oshkosh).